A 483-amino-acid polypeptide reads, in one-letter code: Siroheme synthase (483 aa).

The interval 1–203 (MNYFPIFANL…RQNTLAEREL (203 aa)) is precorrin-2 dehydrogenase /sirohydrochlorin ferrochelatase. NAD(+) is bound by residues 22-23 (AV) and 43-44 (KH). Residue S128 is modified to Phosphoserine. The uroporphyrinogen-III C-methyltransferase stretch occupies residues 214-483 (GFVSLVGAGP…LGTGQEQQAA (270 aa)). Position 223 (P223) interacts with S-adenosyl-L-methionine. The active-site Proton acceptor is D246. The active-site Proton donor is the K268. S-adenosyl-L-methionine contacts are provided by residues 299–301 (GGD), V304, 329–330 (TA), M381, and G410.

This sequence in the N-terminal section; belongs to the precorrin-2 dehydrogenase / sirohydrochlorin ferrochelatase family. The protein in the C-terminal section; belongs to the precorrin methyltransferase family.

The enzyme catalyses uroporphyrinogen III + 2 S-adenosyl-L-methionine = precorrin-2 + 2 S-adenosyl-L-homocysteine + H(+). It catalyses the reaction precorrin-2 + NAD(+) = sirohydrochlorin + NADH + 2 H(+). The catalysed reaction is siroheme + 2 H(+) = sirohydrochlorin + Fe(2+). It participates in cofactor biosynthesis; adenosylcobalamin biosynthesis; precorrin-2 from uroporphyrinogen III: step 1/1. The protein operates within cofactor biosynthesis; adenosylcobalamin biosynthesis; sirohydrochlorin from precorrin-2: step 1/1. It functions in the pathway porphyrin-containing compound metabolism; siroheme biosynthesis; precorrin-2 from uroporphyrinogen III: step 1/1. Its pathway is porphyrin-containing compound metabolism; siroheme biosynthesis; siroheme from sirohydrochlorin: step 1/1. It participates in porphyrin-containing compound metabolism; siroheme biosynthesis; sirohydrochlorin from precorrin-2: step 1/1. In terms of biological role, multifunctional enzyme that catalyzes the SAM-dependent methylations of uroporphyrinogen III at position C-2 and C-7 to form precorrin-2 via precorrin-1. Then it catalyzes the NAD-dependent ring dehydrogenation of precorrin-2 to yield sirohydrochlorin. Finally, it catalyzes the ferrochelation of sirohydrochlorin to yield siroheme. This is Siroheme synthase from Neisseria meningitidis serogroup C / serotype 2a (strain ATCC 700532 / DSM 15464 / FAM18).